The chain runs to 689 residues: Glycine--tRNA ligase beta subunit (689 aa).

Belongs to the class-II aminoacyl-tRNA synthetase family. As to quaternary structure, tetramer of two alpha and two beta subunits.

Its subcellular location is the cytoplasm. The catalysed reaction is tRNA(Gly) + glycine + ATP = glycyl-tRNA(Gly) + AMP + diphosphate. In Aeromonas hydrophila subsp. hydrophila (strain ATCC 7966 / DSM 30187 / BCRC 13018 / CCUG 14551 / JCM 1027 / KCTC 2358 / NCIMB 9240 / NCTC 8049), this protein is Glycine--tRNA ligase beta subunit.